We begin with the raw amino-acid sequence, 401 residues long: 2,3,4,5-tetrahydropyridine-2,6-dicarboxylate N-succinyltransferase (401 aa).

Residue E269 is the Acyl-anhydride intermediate of the active site. Residues R271, G286, S289, A312, 327-328, G335, and K364 each bind succinyl-CoA; that span reads DA.

It belongs to the type 2 tetrahydrodipicolinate N-succinyltransferase family. As to quaternary structure, homotrimer.

The protein localises to the cytoplasm. The catalysed reaction is (S)-2,3,4,5-tetrahydrodipicolinate + succinyl-CoA + H2O = (S)-2-succinylamino-6-oxoheptanedioate + CoA. The protein operates within amino-acid biosynthesis; L-lysine biosynthesis via DAP pathway; LL-2,6-diaminopimelate from (S)-tetrahydrodipicolinate (succinylase route): step 1/3. Its function is as follows. Catalyzes the conversion of the cyclic tetrahydrodipicolinate (THDP) into the acyclic N-succinyl-L-2-amino-6-oxopimelate using succinyl-CoA. This is 2,3,4,5-tetrahydropyridine-2,6-dicarboxylate N-succinyltransferase from Helicobacter pylori (strain ATCC 700392 / 26695) (Campylobacter pylori).